Consider the following 286-residue polypeptide: MASCNLLVIQTTSIIMFSSLLSRPVNSSYDPSYHFSPVTREIKNDPTSNGVVSTTKNATPLAPSKYDTTIPLKKRYPNLVHNFPKPELDENVILETKKIIDSILNPSDEPTNDINYIKYENPNPNPNPNPNPNQEQQQQSSSSSSKIIQIKQFQEDPMLPPKFKLRKNRHERIIEDVTFVKDLKTKKLTKEDREFWNIPAAVSNWKNSQGFTIGLDKRMIGREHVPIEMNIEKFNDLSTALSDADLQAREDLKQRNEIRQQKQLQEKRLRDEKIKEIANRSKRRRY.

Disordered stretches follow at residues 111-146 (TNDINYIKYENPNPNPNPNPNPNQEQQQQSSSSSSK) and 253-286 (KQRNEIRQQKQLQEKRLRDEKIKEIANRSKRRRY). The segment covering 132-145 (PNQEQQQQSSSSSS) has biased composition (low complexity). Residues 253–279 (KQRNEIRQQKQLQEKRLRDEKIKEIAN) are compositionally biased toward basic and acidic residues.

This sequence belongs to the SNW family. Associated with the spliceosome.

The protein resides in the nucleus. Its function is as follows. Involved in pre-mRNA splicing. The chain is Pre-mRNA-processing protein 45 (PRP45) from Candida albicans (strain SC5314 / ATCC MYA-2876) (Yeast).